A 164-amino-acid polypeptide reads, in one-letter code: ATP synthase subunit b 2 (164 aa).

Residues 4–24 (TFWAFVGLVLFLALLVYFQIP) traverse the membrane as a helical segment.

This sequence belongs to the ATPase B chain family. In terms of assembly, F-type ATPases have 2 components, F(1) - the catalytic core - and F(0) - the membrane proton channel. F(1) has five subunits: alpha(3), beta(3), gamma(1), delta(1), epsilon(1). F(0) has three main subunits: a(1), b(2) and c(10-14). The alpha and beta chains form an alternating ring which encloses part of the gamma chain. F(1) is attached to F(0) by a central stalk formed by the gamma and epsilon chains, while a peripheral stalk is formed by the delta and b chains.

It localises to the cell inner membrane. In terms of biological role, f(1)F(0) ATP synthase produces ATP from ADP in the presence of a proton or sodium gradient. F-type ATPases consist of two structural domains, F(1) containing the extramembraneous catalytic core and F(0) containing the membrane proton channel, linked together by a central stalk and a peripheral stalk. During catalysis, ATP synthesis in the catalytic domain of F(1) is coupled via a rotary mechanism of the central stalk subunits to proton translocation. Component of the F(0) channel, it forms part of the peripheral stalk, linking F(1) to F(0). The sequence is that of ATP synthase subunit b 2 from Bartonella tribocorum (strain CIP 105476 / IBS 506).